Consider the following 118-residue polypeptide: Protein TusC (118 aa).

It belongs to the DsrF/TusC family. Heterohexamer, formed by a dimer of trimers. The hexameric TusBCD complex contains 2 copies each of TusB, TusC and TusD. The TusBCD complex interacts with TusE.

It is found in the cytoplasm. In terms of biological role, part of a sulfur-relay system required for 2-thiolation of 5-methylaminomethyl-2-thiouridine (mnm(5)s(2)U) at tRNA wobble positions. The chain is Protein TusC from Salmonella typhi.